The chain runs to 127 residues: uncharacterized protein (127 aa).

Residues 1–46 (MEVGLSPSACLRRIKLMEQAGVIRGYTALVDPTQSESTIAVIINIT) enclose the HTH asnC-type domain.

Its function is as follows. Not known, symbiotically active. This is an uncharacterized protein from Sinorhizobium fredii (strain NBRC 101917 / NGR234).